The following is a 918-amino-acid chain: NEDD4-like E3 ubiquitin-protein ligase WWP1 (918 aa).

The C2 domain occupies 1–116 (MATASPRSDT…THNRKLEKVK (116 aa)). 3 stretches are compositionally biased toward polar residues: residues 150–164 (TNRS…QQNG), 209–219 (NGENTPSSPSQ), and 235–258 (SAPT…STMG). 2 disordered regions span residues 150–182 (TNRS…PRLP) and 209–360 (NGEN…PHGR). The segment covering 266–281 (TTSTSNCTSTTTQEPP) has biased composition (low complexity). WW domains follow at residues 345–378 (EALP…RPQP), 377–410 (QPLP…RPTM), 452–485 (GPLP…DPRT), and 492–525 (EPLP…DPRN). Residues 345–525 (EALPSGWEQR…RTTTFKDPRN (181 aa)) are interaction with ERBB4. A required for interaction with and ubiquitination of AMOTL2. Required for interaction with YAP1 region spans residues 345–527 (EALPSGWEQR…TTFKDPRNGK (183 aa)). Positions 584–918 (KPYDLRRRLY…IEETEGFGQE (335 aa)) constitute an HECT domain. Cys-886 functions as the Glycyl thioester intermediate in the catalytic mechanism.

As to quaternary structure, interacts with the Crumbs complex components PALS1 and PATJ; interaction with the Crumbs complex is enhanced by WWP1's interaction with AMOTL2 and facilitates WWP1 localization to the plasma membrane. Interaction with the Crumbs complex promotes WWP1 monoubiquitination of AMOTL2, which activates the Hippo signaling pathway. Binds SCNN1A, SCNN1B, SCNN1G, WBP1, WBP2, DRPLA and adenovirus type 2 PIII. Interacts with TGIF. Binds KLF2 AND HIVEP3. Interacts with RNF11. Interacts with SPART. Interacts with NDFIP1 and NDFIP2; this interaction activates the E3 ubiquitin-protein ligase. Interacts with ERBB4 isoforms JM-B CYT-1 and JM-A CYT-1. Does not interact with ERB4 isoform JMA-A CYT-2. Interacts with SMAD1, SMAD2, SMAD3, SMAD5, SMAD6, SMAD7, TGFBR1 and TGFBR2. Associates with the TGFBR1:TGFBR2 receptor complex in presence of SMAD7. Interacts with SKIL isoform 1. Interacts with TP63 isoform 1 and isoform 2. Interacts (via WW domains) with ARRDC1, ARRDC2 and ARRDC3. In terms of processing, auto-ubiquitinated and ubiquitinated by RNF11.

The protein resides in the cytoplasm. The protein localises to the cell membrane. It localises to the nucleus. Its subcellular location is the cell junction. It catalyses the reaction S-ubiquitinyl-[E2 ubiquitin-conjugating enzyme]-L-cysteine + [acceptor protein]-L-lysine = [E2 ubiquitin-conjugating enzyme]-L-cysteine + N(6)-ubiquitinyl-[acceptor protein]-L-lysine.. It functions in the pathway protein modification; protein ubiquitination. With respect to regulation, activated by NDFIP1- and NDFIP2-binding. Its function is as follows. E3 ubiquitin-protein ligase which accepts ubiquitin from an E2 ubiquitin-conjugating enzyme in the form of a thioester and then directly transfers the ubiquitin to targeted substrates. Ubiquitinates and promotes degradation of SMAD2 in response to TGF-beta signaling, which requires interaction with TGIF. Ubiquitinates ERBB4 isoforms JM-A CYT-1 and JM-B CYT-1, KLF2, KLF5 and TP63 and promotes their proteasomal degradation. Ubiquitinates RNF11 without targeting it for degradation. Ubiquitinates and promotes degradation of TGFBR1; the ubiquitination is enhanced by SMAD7. Ubiquitinates SMAD6 and SMAD7. Activates the Hippo signaling pathway in response to cell contact inhibition and recruitment to the Crumbs complex at the cell membrane. Monoubiquitinates AMOTL2 which facilitates its interaction with and activation of LATS2. LATS2 then phosphorylates YAP1, excluding it from the nucleus and therefore ultimately represses YAP1-driven transcription of target genes. In Mus musculus (Mouse), this protein is NEDD4-like E3 ubiquitin-protein ligase WWP1 (Wwp1).